A 1486-amino-acid chain; its full sequence is Chromosome partition protein MukB (1486 aa).

Residue G34 to S41 coordinates ATP. 3 coiled-coil regions span residues L326 to Q418, L444 to Q480, and R509 to V603. The flexible hinge stretch occupies residues P666–R783. Coiled coils occupy residues E835–E923, E977–A1115, and V1209–S1266.

The protein belongs to the SMC family. MukB subfamily. As to quaternary structure, homodimerization via its hinge domain. Binds to DNA via its C-terminal region. Interacts, and probably forms a ternary complex, with MukE and MukF via its C-terminal region. The complex formation is stimulated by calcium or magnesium. Interacts with tubulin-related protein FtsZ.

It localises to the cytoplasm. It is found in the nucleoid. Functionally, plays a central role in chromosome condensation, segregation and cell cycle progression. Functions as a homodimer, which is essential for chromosome partition. Involved in negative DNA supercoiling in vivo, and by this means organize and compact chromosomes. May achieve or facilitate chromosome segregation by condensation DNA from both sides of a centrally located replisome during cell division. The sequence is that of Chromosome partition protein MukB from Shigella boydii serotype 18 (strain CDC 3083-94 / BS512).